We begin with the raw amino-acid sequence, 1357 residues long: Major yolk protein (1357 aa).

The N-terminal stretch at 1-15 (MRAAILFCLVASSMA) is a signal peptide. Transferrin-like domains lie at 132–478 (VRWC…GEVY) and 493–1101 (AKIC…AIVK). 22 N-linked (GlcNAc...) asparagine glycosylation sites follow: Asn-198, Asn-227, Asn-304, Asn-310, Asn-402, Asn-499, Asn-530, Asn-541, Asn-572, Asn-578, Asn-625, Asn-639, Asn-692, Asn-732, Asn-741, Asn-1035, Asn-1043, Asn-1081, Asn-1128, Asn-1208, Asn-1241, and Asn-1258.

The protein belongs to the transferrin family. In terms of tissue distribution, synthesized in the intestines of the females and males and also in ovaries and testis.

The protein resides in the secreted. In terms of biological role, may serve the following two functions: a classical role as a yolk protein precursor and probably shuttle iron to developing germ cells. This chain is Major yolk protein, found in Strongylocentrotus purpuratus (Purple sea urchin).